A 962-amino-acid polypeptide reads, in one-letter code: Splicing regulator ARVCF (962 aa).

Residues 11-46 are a coiled coil; that stretch reads SILASVKEQEARFERLTRALEQERRHVALQLERAQQ. Residues 95 to 123 are disordered; the sequence is VTVEEDPGTPTSHVSIVTSEDGTTRRTET. 2 positions are modified to phosphothreonine: Thr-103 and Thr-105. Residues 103–115 are compositionally biased toward polar residues; the sequence is TPTSHVSIVTSED. Arg-171 is modified (omega-N-methylarginine). 3 disordered regions span residues 233-255, 268-291, and 322-357; these read GRREAFPMGSESGPPSGRSLPEH, RSLAADDEGGPDLEPDYSTATRRR, and AATAPLAQPERGSLGSLDRVVRRSPSVDSTRKEPRW. At Ser-269 the chain carries Phosphoserine. A compositionally biased stretch (acidic residues) spans 272 to 282; that stretch reads ADDEGGPDLEP. Phosphoserine is present on residues Ser-334, Ser-337, Ser-345, and Ser-347. ARM repeat units lie at residues 350-389, 392-431, 435-469, 470-510, 528-567, and 577-623; these read STRKEPRWRDPELPEVLAMLRHPVDPVKANAAAYLQHLCF, EGIKRRVRQLRGLPLLVALLDHPRAEVRRRACGALRNLSY, TDNKAAIRDCGGVPALVRLLRAARDNEVRELVTGT, LWNL…NEDS, LRNVSSDGAEARRRLRECEGLVDALLHALQSAVGRKDTDN, and MRNL…GKKA. The disordered stretch occupies residues 593-618; it reads RYQEAEPGIPGSTTSQRRRKDDASCF. At Ser-607 the chain carries Phosphoserine. Residues 608 to 624 carry the Nuclear localization signal motif; the sequence is QRRRKDDASCFGGKKAK. Thr-643 bears the Phosphothreonine mark. ARM repeat units follow at residues 647–687, 700–739, 740–782, and 783–827; these read PKRT…AAGA, TYIRATVRKERGLPVLVELLQSETDKVVRAVAIALRNLSL, DQRN…AVLN, and TIHE…SHVL. A required for interaction with RNA-binding proteins DDX5, HNRNPH2 and SRSF1 and with mRNAs region spans residues 777-962; it reads VVAVLNTIHE…TKPQPVDSWV (186 aa). A disordered region spans residues 844-962; that stretch reads GWTKSRFQSA…TKPQPVDSWV (119 aa). A phosphoserine mark is found at Ser-864 and Ser-871. Phosphothreonine is present on Thr-872. Composition is skewed to basic and acidic residues over residues 878 to 887 and 920 to 932; these read KSLDGEKSNT and TSEKELLRPDPGR.

The protein belongs to the beta-catenin family. Component of a ribonucleoprotein complex containing mRNAs and RNA-binding proteins including DDX5, HNRNPH2 and SRSF1 as well as ARVCF. Interacts (via the extreme C-terminus) with FRMPD2 (via the PDZ 2 domain). Interacts with CCDC85B.

Its subcellular location is the cell junction. The protein resides in the adherens junction. The protein localises to the nucleus. It localises to the cytoplasm. Functionally, contributes to the regulation of alternative splicing of pre-mRNAs. The polypeptide is Splicing regulator ARVCF (Arvcf) (Mus musculus (Mouse)).